Here is a 538-residue protein sequence, read N- to C-terminus: Syncytin-2 (538 aa).

An N-terminal signal peptide occupies residues 1–15; that stretch reads MGLLLLVLILTPSLA. At 16–478 the chain is on the extracellular side; it reads AYRHPDFPLL…GWLNWEGTWK (463 aa). A CXXC motif is present at residues 43–46; the sequence is CWLC. 3 cysteine pairs are disulfide-bonded: Cys43–Cys46, Cys43–Cys439, and Cys431–Cys438. Asn133, Asn146, Asn177, Asn220, Asn241, Asn247, Asn312, and Asn332 each carry an N-linked (GlcNAc...) asparagine glycan. A fusion peptide region spans residues 354–374; sequence FIPLLAGLGILAGTGTGIAGI. Positions 414-430 match the CKS-17 motif; that stretch reads LQNRRGLDMLTAAQGGI. Residues 431–439 carry the CX6CC motif; it reads CLALDEKCC. Asn443 is a glycosylation site (N-linked (GlcNAc...) asparagine). The helical transmembrane segment at 479 to 499 threads the bilayer; sequence WFSWVLPLTGPLVSLLLLLLF. At 500–538 the chain is on the cytoplasmic side; the sequence is GPCLLNLITQFVSSRLQAIKLQTNLSAGRRPRNIQESPF.

This sequence belongs to the gamma type-C retroviral envelope protein family. HERV class-I FRD env subfamily. As to quaternary structure, the surface and transmembrane proteins form a heterodimer. They are attached by non-covalent interactions or by a labile interchain disulfide bond. Specific enzymatic cleavages in vivo yield the mature SU and TM proteins. In terms of processing, the CXXC motif is highly conserved across a broad range of retroviral envelope proteins. It is thought to participate in the formation of a labile disulfide bond possibly with the CX6CC motif present in the transmembrane protein.

It localises to the virion. The protein localises to the cell membrane. Its function is as follows. This endogenous retroviral envelope protein has retained its original fusogenic properties and participates in trophoblast fusion and the formation of a syncytium during placenta morphogenesis. The interaction with MFSD2A is apparently important for this process. Endogenous envelope proteins may have kept, lost or modified their original function during evolution but this one can still make pseudotypes with MLV, HIV-1 or SIV-1 virions and confer infectivity. Retroviral envelope proteins mediate receptor recognition and membrane fusion during early infection. The surface protein mediates receptor recognition, while the transmembrane protein anchors the envelope heterodimer to the viral membrane through one transmembrane domain. The other hydrophobic domain, called fusion peptide, mediates fusion of the viral membrane with the target cell membrane. This is Syncytin-2 (ERVFRD-1) from Gorilla gorilla gorilla (Western lowland gorilla).